A 729-amino-acid polypeptide reads, in one-letter code: Polyribonucleotide nucleotidyltransferase (729 aa).

Mg(2+) is bound by residues Asp485 and Asp491. The 60-residue stretch at 552 to 611 (PRITTMKVAEDKIRTIIGKGGATIKGLIESTGVSIDIDDSGVVQLFSPDKMALEEAQKQI) folds into the KH domain. An S1 motif domain is found at 621-689 (GQTYQGKVSK…KQGRVKLEWK (69 aa)).

It belongs to the polyribonucleotide nucleotidyltransferase family. As to quaternary structure, component of the RNA degradosome, which is a multiprotein complex involved in RNA processing and mRNA degradation. Mg(2+) serves as cofactor.

The protein resides in the cytoplasm. It catalyses the reaction RNA(n+1) + phosphate = RNA(n) + a ribonucleoside 5'-diphosphate. Its function is as follows. Involved in mRNA degradation. Catalyzes the phosphorolysis of single-stranded polyribonucleotides processively in the 3'- to 5'-direction. The polypeptide is Polyribonucleotide nucleotidyltransferase (Legionella pneumophila subsp. pneumophila (strain Philadelphia 1 / ATCC 33152 / DSM 7513)).